The following is a 207-amino-acid chain: MQFTKIDINNWTRKEYFDHYFGNTPCTYSMTVKLDISKLKKDGKKLYPTLLYGVTTIINRHEEFRTALDENGQVGVFSEMLPCYTVFHKETETFSSIWTEFTADYTEFLQNYQKDIDAFGERMGMSAKPNPPENTFPVSMIPWTSFEGFNLNLKKGYDYLLPIFTFGKYYEEGGKYYIPLSIQVHHAVCDGFHVCRFLDELQDLLNK.

The active-site Proton acceptor is the His186.

The protein belongs to the chloramphenicol acetyltransferase family. Homotrimer.

It carries out the reaction chloramphenicol + acetyl-CoA = chloramphenicol 3-acetate + CoA. Its function is as follows. This enzyme is an effector of chloramphenicol resistance in bacteria. This is Chloramphenicol acetyltransferase from Campylobacter coli.